The sequence spans 270 residues: 4-hydroxy-tetrahydrodipicolinate reductase (270 aa).

7 to 12 (GVSGRM) lines the NAD(+) pocket. Arg34 provides a ligand contact to NADP(+). Residues 97–99 (GTT) and 121–124 (SGNM) contribute to the NAD(+) site. The active-site Proton donor/acceptor is the His155. His156 contributes to the (S)-2,3,4,5-tetrahydrodipicolinate binding site. Lys159 (proton donor) is an active-site residue. 165 to 166 (GT) is a binding site for (S)-2,3,4,5-tetrahydrodipicolinate.

It belongs to the DapB family.

The protein localises to the cytoplasm. The enzyme catalyses (S)-2,3,4,5-tetrahydrodipicolinate + NAD(+) + H2O = (2S,4S)-4-hydroxy-2,3,4,5-tetrahydrodipicolinate + NADH + H(+). It catalyses the reaction (S)-2,3,4,5-tetrahydrodipicolinate + NADP(+) + H2O = (2S,4S)-4-hydroxy-2,3,4,5-tetrahydrodipicolinate + NADPH + H(+). It participates in amino-acid biosynthesis; L-lysine biosynthesis via DAP pathway; (S)-tetrahydrodipicolinate from L-aspartate: step 4/4. Catalyzes the conversion of 4-hydroxy-tetrahydrodipicolinate (HTPA) to tetrahydrodipicolinate. The chain is 4-hydroxy-tetrahydrodipicolinate reductase from Allorhizobium ampelinum (strain ATCC BAA-846 / DSM 112012 / S4) (Agrobacterium vitis (strain S4)).